We begin with the raw amino-acid sequence, 517 residues long: 2,3-bisphosphoglycerate-independent phosphoglycerate mutase (517 aa).

Aspartate 14 and serine 64 together coordinate Mn(2+). Serine 64 functions as the Phosphoserine intermediate in the catalytic mechanism. Substrate contacts are provided by residues histidine 125, 155 to 156 (RD), arginine 187, arginine 193, 263 to 266 (RSDR), and lysine 337. Positions 404, 408, 445, 446, and 464 each coordinate Mn(2+).

Belongs to the BPG-independent phosphoglycerate mutase family. Monomer. Requires Mn(2+) as cofactor.

The catalysed reaction is (2R)-2-phosphoglycerate = (2R)-3-phosphoglycerate. Its pathway is carbohydrate degradation; glycolysis; pyruvate from D-glyceraldehyde 3-phosphate: step 3/5. Functionally, catalyzes the interconversion of 2-phosphoglycerate and 3-phosphoglycerate. This is 2,3-bisphosphoglycerate-independent phosphoglycerate mutase from Nitrosococcus oceani (strain ATCC 19707 / BCRC 17464 / JCM 30415 / NCIMB 11848 / C-107).